The sequence spans 318 residues: D-alanine--D-alanine ligase (318 aa).

An ATP-grasp domain is found at 101–307; that stretch reads KKIIQYEGLP…FPDLIEKLVE (207 aa). 135–190 contributes to the ATP binding site; it reads CREMGLPLVVKAPTQGSTIGMSFVHKEEDMAGALELAYDYDPVALVEQFIRGTEVT. D261, E274, and N276 together coordinate Mg(2+).

It belongs to the D-alanine--D-alanine ligase family. It depends on Mg(2+) as a cofactor. Mn(2+) serves as cofactor.

It localises to the cytoplasm. It catalyses the reaction 2 D-alanine + ATP = D-alanyl-D-alanine + ADP + phosphate + H(+). It participates in cell wall biogenesis; peptidoglycan biosynthesis. Its function is as follows. Cell wall formation. This is D-alanine--D-alanine ligase from Pelotomaculum thermopropionicum (strain DSM 13744 / JCM 10971 / SI).